The primary structure comprises 69 residues: UPF0346 protein YuiB (69 aa).

The protein belongs to the UPF0346 family.

This chain is UPF0346 protein YuiB (yuiB), found in Lactococcus lactis subsp. lactis (strain IL1403) (Streptococcus lactis).